Consider the following 208-residue polypeptide: Large ribosomal subunit protein uL4 (208 aa).

The interval 45-78 (RQGTAKSKERSEMSGSTRKLGRQKGSGGARRGDI) is disordered.

It belongs to the universal ribosomal protein uL4 family. In terms of assembly, part of the 50S ribosomal subunit.

Functionally, one of the primary rRNA binding proteins, this protein initially binds near the 5'-end of the 23S rRNA. It is important during the early stages of 50S assembly. It makes multiple contacts with different domains of the 23S rRNA in the assembled 50S subunit and ribosome. In terms of biological role, forms part of the polypeptide exit tunnel. The protein is Large ribosomal subunit protein uL4 of Azobacteroides pseudotrichonymphae genomovar. CFP2.